The following is a 185-amino-acid chain: Ribonuclease M5 1 (185 aa).

The 84-residue stretch at 4–87 folds into the Toprim domain; sequence KEVIVVEGKD…AFLTKHDAAP (84 aa). The Mg(2+) site is built by Glu-10, Asp-56, and Asp-58.

This sequence belongs to the ribonuclease M5 family. Mg(2+) is required as a cofactor.

The protein localises to the cytoplasm. The enzyme catalyses Endonucleolytic cleavage of RNA, removing 21 and 42 nucleotides, respectively, from the 5'- and 3'-termini of a 5S-rRNA precursor.. Functionally, required for correct processing of both the 5' and 3' ends of 5S rRNA precursor. Cleaves both sides of a double-stranded region yielding mature 5S rRNA in one step. This is Ribonuclease M5 1 from Ligilactobacillus salivarius (strain UCC118) (Lactobacillus salivarius).